Consider the following 197-residue polypeptide: Recombination protein RecR (197 aa).

Residues 57 to 72 (CSVCFGITEEDPCRLC) form a C4-type zinc finger. The 96-residue stretch at 79 to 174 (TSLCVVEEPQ…RVTRLAHGIP (96 aa)) folds into the Toprim domain.

Belongs to the RecR family.

Its function is as follows. May play a role in DNA repair. It seems to be involved in an RecBC-independent recombinational process of DNA repair. It may act with RecF and RecO. The chain is Recombination protein RecR from Geobacter metallireducens (strain ATCC 53774 / DSM 7210 / GS-15).